The chain runs to 454 residues: uncharacterized protein (454 aa).

This is an uncharacterized protein from Rickettsia prowazekii (strain Madrid E).